A 236-amino-acid chain; its full sequence is Cutinase (236 aa).

The signal sequence occupies residues 1–20 (MSLTLFSFLSLVSILCIVTA). An intrachain disulfide couples cysteine 66 to cysteine 143. Serine 154 functions as the Nucleophile in the catalytic mechanism. Cysteine 202 and cysteine 209 are oxidised to a cystine. The active site involves aspartate 206. Histidine 218 (proton donor/acceptor) is an active-site residue.

It belongs to the cutinase family. The 2 disulfide bonds play a critical role in holding the catalytic residues in juxta-position; reduction of the disulfide bridges results in the complete inactivation of the enzyme.

It localises to the secreted. It catalyses the reaction cutin + H2O = cutin monomers.. Its function is as follows. Catalyzes the hydrolysis of complex carboxylic polyesters found in the cell wall of plants. Degrades cutin, a macromolecule that forms the structure of the plant cuticle. Allows pathogenic fungi to penetrate through the cuticular barrier into the host plant during the initial stage of fungal infection. This chain is Cutinase (CUT1), found in Blumeria hordei (Barley powdery mildew).